A 210-amino-acid polypeptide reads, in one-letter code: MSAAMSEVRIAAEPRTEFGKGGARRTRRAGKVPAVLYGHGKPPRHIALPAHDLLHAFKTDAGTNVLLTLELAEGTELALAKDVQRHPIKGSFEHIDLVLVARGEKVVADIPVQVIGEPHPDTLVDQQVTTIAVKADATRLPGPIEVDITGLEPGTSILARQLVLPAGSELDADPDLVVVQCLAKRTNAQQEASLGETPVAEEAGVASASV.

This sequence belongs to the bacterial ribosomal protein bL25 family. CTC subfamily. As to quaternary structure, part of the 50S ribosomal subunit; part of the 5S rRNA/L5/L18/L25 subcomplex. Contacts the 5S rRNA. Binds to the 5S rRNA independently of L5 and L18.

In terms of biological role, this is one of the proteins that binds to the 5S RNA in the ribosome where it forms part of the central protuberance. This is Large ribosomal subunit protein bL25 from Frankia casuarinae (strain DSM 45818 / CECT 9043 / HFP020203 / CcI3).